The following is a 182-amino-acid chain: Large ribosomal subunit protein bL25 (182 aa).

This sequence belongs to the bacterial ribosomal protein bL25 family. CTC subfamily. Part of the 50S ribosomal subunit; part of the 5S rRNA/L5/L18/L25 subcomplex. Contacts the 5S rRNA. Binds to the 5S rRNA independently of L5 and L18.

This is one of the proteins that binds to the 5S RNA in the ribosome where it forms part of the central protuberance. This chain is Large ribosomal subunit protein bL25, found in Borreliella burgdorferi (strain ZS7) (Borrelia burgdorferi).